Here is a 221-residue protein sequence, read N- to C-terminus: Ribosomal RNA large subunit methyltransferase E (221 aa).

Gly60, Trp62, Asp89, Asp105, and Asp134 together coordinate S-adenosyl-L-methionine. Catalysis depends on Lys174, which acts as the Proton acceptor.

Belongs to the class I-like SAM-binding methyltransferase superfamily. RNA methyltransferase RlmE family.

The protein resides in the cytoplasm. The catalysed reaction is uridine(2552) in 23S rRNA + S-adenosyl-L-methionine = 2'-O-methyluridine(2552) in 23S rRNA + S-adenosyl-L-homocysteine + H(+). Its function is as follows. Specifically methylates the uridine in position 2552 of 23S rRNA at the 2'-O position of the ribose in the fully assembled 50S ribosomal subunit. The protein is Ribosomal RNA large subunit methyltransferase E of Cupriavidus necator (strain ATCC 17699 / DSM 428 / KCTC 22496 / NCIMB 10442 / H16 / Stanier 337) (Ralstonia eutropha).